The following is a 326-amino-acid chain: Metallophosphoesterase domain-containing protein 1 (326 aa).

It belongs to the UPF0046 family. Expressed predominantly in adult brain.

Functionally, may have metallophosphoesterase activity (in vitro). This is Metallophosphoesterase domain-containing protein 1 (MPPED1) from Homo sapiens (Human).